The sequence spans 510 residues: Chromosomal replication initiator protein DnaA (510 aa).

The segment at 1–107 is domain I, interacts with DnaA modulators; it reads MTNDPGSGFA…VRIAPPPADD (107 aa). Positions 107–169 are domain II; the sequence is DDDDSVAAAV…ADTSASADGT (63 aa). The interval 119–168 is disordered; it reads PGLEASPETSQEVSDEIDDFGENAPKSRQSWPTHFKKRSTDADTSASADG. Residues 170-386 are domain III, AAA+ region; sequence SLNRRYTFDT…GALIRVTAFA (217 aa). ATP contacts are provided by Gly-214, Gly-216, Lys-217, and Thr-218. The tract at residues 387 to 510 is domain IV, binds dsDNA; the sequence is SLNKTPIDKA…TTRIRQRSKR (124 aa).

This sequence belongs to the DnaA family. In terms of assembly, oligomerizes as a right-handed, spiral filament on DNA at oriC.

Its subcellular location is the cytoplasm. Plays an essential role in the initiation and regulation of chromosomal replication. ATP-DnaA binds to the origin of replication (oriC) to initiate formation of the DNA replication initiation complex once per cell cycle. Binds the DnaA box (a 9 base pair repeat at the origin) and separates the double-stranded (ds)DNA. Forms a right-handed helical filament on oriC DNA; dsDNA binds to the exterior of the filament while single-stranded (ss)DNA is stabiized in the filament's interior. The ATP-DnaA-oriC complex binds and stabilizes one strand of the AT-rich DNA unwinding element (DUE), permitting loading of DNA polymerase. After initiation quickly degrades to an ADP-DnaA complex that is not apt for DNA replication. Binds acidic phospholipids. The polypeptide is Chromosomal replication initiator protein DnaA (Mycobacterium ulcerans (strain Agy99)).